A 251-amino-acid chain; its full sequence is MPSPRPRGSPPPAPSGSRVRPPRSGRSPAPRSPTGPNTPRAPGRFESPFSVEAILARPDPCAPAASQPSGSACVHPAFWTAASLCATGGLPWACPTSWLPAYLSVGFYPVPGPRVAPVCGLLGFGVTGLELAHCSGLWAFPDWAPTEDLQDTERQQKRVRTMFNLEQLEELEKVFAKQHNLVGKKRAQLAARLKLTENQVRVWFQNRRVKYQKQQKLRAAVTSAEAASLDEPSSSSIASIQSDDAESGVDG.

Over residues 1–14 the composition is skewed to pro residues; the sequence is MPSPRPRGSPPPAP. The interval 1 to 47 is disordered; it reads MPSPRPRGSPPPAPSGSRVRPPRSGRSPAPRSPTGPNTPRAPGRFES. The segment covering 15–35 has biased composition (low complexity); sequence SGSRVRPPRSGRSPAPRSPTG. Residues 156–215 constitute a DNA-binding region (homeobox); that stretch reads QKRVRTMFNLEQLEELEKVFAKQHNLVGKKRAQLAARLKLTENQVRVWFQNRRVKYQKQQ. Over residues 224–242 the composition is skewed to low complexity; that stretch reads AEAASLDEPSSSSIASIQS. The disordered stretch occupies residues 224-251; it reads AEAASLDEPSSSSIASIQSDDAESGVDG.

The protein localises to the nucleus. Functionally, transcription regulator acting downstream of both FOXA2 and Brachyury (T) during notochord development. Required for node morphogenesis. Is essential for cilia formation in the posterior notochord (PNC) and for left-right patterning; acts upstream of FOXJ1 and RFX3 in this process and is required for the expression of various components important for axonemal assembly and function. Plays a role in regulating axial versus paraxial cell fate. Activates the transcription of ciliary proteins C11orf97 homolog, FAM183B and SPACA9 in the embryonic ventral node. The chain is Homeobox protein notochord (NOTO) from Homo sapiens (Human).